A 1179-amino-acid polypeptide reads, in one-letter code: Putative ankyrin repeat protein RF_0381 (1179 aa).

18 ANK repeats span residues 282–311, 604–633, 637–666, 670–699, 703–732, 736–765, 769–798, 802–831, 833–860, 864–893, 897–926, 930–959, 963–992, 996–1025, 1029–1058, 1062–1091, 1095–1124, and 1128–1157; these read NGYQ…MHRQ, NKDQ…NPNA, HGVI…DVNA, NGET…NIHA, NGET…DVNA, NGLT…DVNA, SGET…DVNA, NGET…NVNN, KTIL…DIHA, SGET…DIHA, SGET…DINT, DGLT…DVNA, and SGET…DINL.

This chain is Putative ankyrin repeat protein RF_0381, found in Rickettsia felis (strain ATCC VR-1525 / URRWXCal2) (Rickettsia azadi).